The primary structure comprises 43 residues: Mu-conotoxin-like Cal 12.2c (43 aa).

Residue Arg-1 is a propeptide. Disulfide bonds link Cys-4-Cys-16, Cys-11-Cys-24, Cys-18-Cys-29, and Cys-23-Cys-35. Trp-31 bears the 6'-bromotryptophan mark. 4-hydroxyproline is present on Pro-36. Trp-40 is modified (6'-bromotryptophan).

As to expression, expressed by the venom duct.

It is found in the secreted. Functionally, mu-conotoxins block voltage-gated sodium channels. This toxin reversibly blocks voltage-gated sodium channel in cephalopods, with no alteration in the voltage dependence of sodium conductance or on the kinetics of inactivation. The protein is Mu-conotoxin-like Cal 12.2c of Californiconus californicus (California cone).